The chain runs to 78 residues: MKLTCMMIVTVLFLTAWIFITADNSRNGIENLPRMRRHEMKNPKASKLNKRGCREGGEFCGTLYEERCCSGWCFFVCV.

A signal peptide spans 1 to 22; it reads MKLTCMMIVTVLFLTAWIFITA. A propeptide spanning residues 23 to 49 is cleaved from the precursor; the sequence is DNSRNGIENLPRMRRHEMKNPKASKLN. 3 disulfides stabilise this stretch: C53–C69, C60–C73, and C68–C77.

This sequence belongs to the conotoxin O1 superfamily. Expressed by the venom duct.

The protein localises to the secreted. This is Conotoxin 5 from Conus imperialis (Imperial cone).